The sequence spans 668 residues: Nuclear pore complex protein Nup75 (668 aa).

The protein belongs to the nucleoporin Nup85 family. In terms of assembly, component of the nuclear pore complex (NPC). Component of the NPC Nup107-160 subcomplex.

It localises to the nucleus. It is found in the nuclear pore complex. Its subcellular location is the nucleus membrane. Its function is as follows. Component of the nuclear pore complex (NPC) that seems to be required for NPC assembly and maintenance. Required for nuclear import of phosphorylated Mad via importin msk. Has no role in classical nuclear localization signal (cNLS)-dependent nuclear import via importin-beta. Facilitates the interaction between Nup93 and sec13 with msk. The chain is Nuclear pore complex protein Nup75 from Drosophila melanogaster (Fruit fly).